The following is a 1906-amino-acid chain: DENN domain-containing protein 4C (1906 aa).

The MABP domain maps to 40-199; sequence KAPITDIAVI…NVFLCYKKSV (160 aa). Positions 191-363 constitute a uDENN domain; sequence VFLCYKKSVP…NIPFPSPQRP (173 aa). The 137-residue stretch at 384–520 folds into the cDENN domain; the sequence is PLPLSGANFS…PCKSLLGTLR (137 aa). A dDENN domain is found at 522 to 640; the sequence is LYQQLCSVHR…CSFVSDKDTG (119 aa). 3 positions are modified to phosphoserine: serine 702, serine 736, and serine 740. The stretch at 818 to 852 is one PPR repeat; the sequence is DEVCYRVVMQLCGLWVNPVLAVRVLFEMKTARIKP. The span at 904 to 917 shows a compositional bias: polar residues; that stretch reads SQVFSISGGQSDQG. Disordered regions lie at residues 904–942 and 963–984; these read SQVFSISGGQSDQGYGSKDELVKEGADGHAPEEHTPPEL and LQPTPEPQSPTEPPAWGSSIVK. Residues 920-939 show a composition bias toward basic and acidic residues; it reads SKDELVKEGADGHAPEEHTP. Phosphothreonine is present on threonine 966. The span at 966-975 shows a compositional bias: pro residues; that stretch reads TPEPQSPTEP. Serine 971 is subject to Phosphoserine. The residue at position 973 (threonine 973) is a Phosphothreonine. A phosphoserine mark is found at serine 987, serine 1000, serine 1043, serine 1058, serine 1096, and serine 1123. A compositionally biased stretch (polar residues) spans 1154–1171; sequence NSLQSNSHSDQSRDTQAG. Residues 1154–1184 are disordered; it reads NSLQSNSHSDQSRDTQAGAQDPVNKRSSSYA. Serine 1181, serine 1221, serine 1240, serine 1248, and serine 1274 each carry phosphoserine. The segment at 1246–1317 is disordered; it reads SCSMELHGEG…PQSPYRAYKD (72 aa). Over residues 1281 to 1291 the composition is skewed to basic and acidic residues; the sequence is PPARDSTETEK. Positions 1292-1302 are enriched in polar residues; sequence SSPAVSSSKTL. Phosphoserine is present on residues serine 1321, serine 1333, and serine 1342. 3 disordered regions span residues 1410-1440, 1548-1577, and 1596-1628; these read SPNTSVSGLVPSELTQSNTSLGSSSSSGDVG, STSGDSLQSGSIPSASEPSEHKPTSSSAEP, and ASYTVESSDEIKKTNGDVQSVKMSSVPNSLSKR. Over residues 1423-1437 the composition is skewed to low complexity; that stretch reads LTQSNTSLGSSSSSG. 2 stretches are compositionally biased toward polar residues: residues 1548-1564 and 1611-1628; these read STSGDSLQSGSIPSASE and GDVQSVKMSSVPNSLSKR. Residues serine 1620, serine 1624, serine 1626, serine 1637, and serine 1796 each carry the phosphoserine modification.

Post-translationally, phosphorylated in response to insulin.

The protein resides in the cytoplasmic vesicle membrane. The protein localises to the cell membrane. It is found in the cytoplasm. Its subcellular location is the cytosol. In terms of biological role, guanine nucleotide exchange factor (GEF) activating RAB10. Promotes the exchange of GDP to GTP, converting inactive GDP-bound RAB10 into its active GTP-bound form. Thereby, stimulates SLC2A4/GLUT4 glucose transporter-enriched vesicles delivery to the plasma membrane in response to insulin. This chain is DENN domain-containing protein 4C (Dennd4c), found in Mus musculus (Mouse).